The sequence spans 257 residues: Global transcriptional regulator CodY (257 aa).

The segment at Met1–Leu155 is GAF domain. A DNA-binding region (H-T-H motif) is located at residues Ala203–Arg222.

Belongs to the CodY family.

It localises to the cytoplasm. DNA-binding global transcriptional regulator which is involved in the adaptive response to starvation and acts by directly or indirectly controlling the expression of numerous genes in response to nutrient availability. During rapid exponential growth, CodY is highly active and represses genes whose products allow adaptation to nutrient depletion. The protein is Global transcriptional regulator CodY of Staphylococcus carnosus (strain TM300).